The primary structure comprises 865 residues: Fanconi-associated nuclease 1 homolog (865 aa).

The UBZ4-type zinc-finger motif lies at 35–62; that stretch reads GKICPLCETKFSLASYKSHMNTCNVADD. Cys38, Cys41, His53, and Cys57 together coordinate Zn(2+). Disordered stretches follow at residues 90 to 140 and 162 to 187; these read DASF…SLDV and RRSSRLLQNSQKDQADNANKEDPVKK. Basic and acidic residues-rich tracts occupy residues 93–112 and 174–187; these read FSDKSENPTKRRKTDEREVP and DQADNANKEDPVKK. 4 residues coordinate Mn(2+): Glu682, Asp810, Glu825, and Val826. The 114-residue stretch at 744-857 folds into the VRR-NUC domain; it reads QELIEENIRK…GIRAEVCHVA (114 aa).

It belongs to the FAN1 family. Mn(2+) serves as cofactor. Mg(2+) is required as a cofactor.

The protein resides in the nucleus. The catalysed reaction is Hydrolytically removes 5'-nucleotides successively from the 3'-hydroxy termini of 3'-hydroxy-terminated oligonucleotides.. In terms of biological role, nuclease required for the repair of DNA interstrand cross-links (ICL). Acts as a 5'-3' exonuclease that anchors at a cut end of DNA and cleaves DNA successively at every third nucleotide, allowing to excise an ICL from one strand through flanking incisions. This is Fanconi-associated nuclease 1 homolog (fan-1) from Caenorhabditis elegans.